The sequence spans 1982 residues: CASP8-associated protein 2 (1982 aa).

Position 2 is an N-acetylalanine (alanine 2). At serine 20 the chain carries Phosphoserine. Over residues 159–191 the composition is skewed to basic and acidic residues; sequence VKTKDLKSRSPHLDDCSKTDHRAKSDVSKDVHH. Positions 159–552 are disordered; sequence VKTKDLKSRS…ESGPNETKNK (394 aa). Serine 194 is subject to Phosphoserine. Residues 198-210 are compositionally biased toward basic and acidic residues; that stretch reads LEKEGKPHSDKRS. Positions 225–240 are enriched in polar residues; that stretch reads GVWSRSHYQVGEGSSN. Residues 286-395 are compositionally biased toward basic and acidic residues; it reads GHPEKYGKGE…ERASLPHSKN (110 aa). The span at 396–405 shows a compositional bias: polar residues; it reads EITFSHNSSK. 3 stretches are compositionally biased toward basic and acidic residues: residues 406-423, 444-455, and 463-524; these read YHLE…DKSV, KNIDSKEVDAMH, and KAER…KGEV. At serine 567 the chain carries Phosphoserine. The tract at residues 569-593 is disordered; the sequence is AKKQPVSQDNQHKITDIPKSSGVCD. Residues serine 658, serine 815, and serine 875 each carry the phosphoserine modification. 3 disordered regions span residues 875-1017, 1157-1188, and 1251-1283; these read SPPQ…DKVM, FGRD…DNSN, and ERSL…HATL. Over residues 894 to 904 the composition is skewed to polar residues; that stretch reads SAHSTSKSQSD. Basic and acidic residues-rich tracts occupy residues 905 to 924, 936 to 965, 999 to 1016, and 1157 to 1170; these read LNKE…EADT, GEIR…DVRK, KRPD…KDKV, and FGRD…EKTS. Phosphoserine is present on serine 940. Serine 1161 bears the Phosphoserine mark. Composition is skewed to polar residues over residues 1171–1181 and 1269–1281; these read KQNAQYSNSQK and GSSI…SQHA. An N6-acetyllysine modification is found at lysine 1343. Positions 1683-1687 match the SUMO interaction motif 1 (SIM); mediates the binding to polysumoylated substrates motif; it reads YVDLT. Residues 1709–1982 form an NCOA2-binding region; that stretch reads DQLGCSGGNL…MKLFEKSKCR (274 aa). The SUMO interaction motif 2 (SIM); mediates the binding to polysumoylated substrates motif lies at 1737-1741; the sequence is FIDLT. The SUMO interaction motif 3 (SIM); mediates the binding to polysumoylated substrates motif lies at 1794-1798; it reads YIDLT. The segment at 1803–1909 is disordered; that stretch reads SSCEVKKDEL…IKDSSAALAT (107 aa). Positions 1851–1865 are enriched in basic and acidic residues; it reads KETDLTNKEKTKKPT.

In terms of assembly, self-associates. Component of the death-inducing signaling complex (DISC) with CASP8, FADD and FAS. Interacts with NCOA2 and NCOA3. Interacts with SRRT. Interacts with TRAF2. Interacts with NPAT. Interacts (via SIM domains) with SUMO1 and SUMO2. Interacts with SP100; may negatively regulate CASP8AP2 export from the nucleus to the cytoplasm.

The protein localises to the cytoplasm. It is found in the nucleus. The protein resides in the PML body. Its subcellular location is the mitochondrion. In terms of biological role, participates in TNF-alpha-induced blockade of glucocorticoid receptor (GR) transactivation at the nuclear receptor coactivator level, upstream and independently of NF-kappa-B. Suppresses both NCOA2- and NCOA3-induced enhancement of GR transactivation. Involved in TNF-alpha-induced activation of NF-kappa-B via a TRAF2-dependent pathway. Acts as a downstream mediator for CASP8-induced activation of NF-kappa-B. Required for the activation of CASP8 in FAS-mediated apoptosis. Required for histone gene transcription and progression through S phase. This chain is CASP8-associated protein 2, found in Homo sapiens (Human).